Reading from the N-terminus, the 137-residue chain is Putative pre-16S rRNA nuclease (137 aa).

The protein belongs to the YqgF nuclease family.

It localises to the cytoplasm. In terms of biological role, could be a nuclease involved in processing of the 5'-end of pre-16S rRNA. The polypeptide is Putative pre-16S rRNA nuclease (Clostridium perfringens (strain ATCC 13124 / DSM 756 / JCM 1290 / NCIMB 6125 / NCTC 8237 / Type A)).